The primary structure comprises 381 residues: Probable serine/threonine-protein kinase PBL22 (381 aa).

A lipid anchor (S-palmitoyl cysteine) is attached at Cys3. Residue Thr64 is modified to Phosphothreonine. In terms of domain architecture, Protein kinase spans 75-351; that stretch reads FREGNIIGKG…GDVVVAFEYI (277 aa). ATP contacts are provided by residues 81–89 and Lys103; that span reads IGKGGFGSV. A Phosphotyrosine modification is found at Tyr148. Asp201 functions as the Proton acceptor in the catalytic mechanism. Phosphoserine is present on Ser235. Residues Thr236 and Thr241 each carry the phosphothreonine modification. Tyr249 is subject to Phosphotyrosine. Positions 361–381 are disordered; that stretch reads RRTARKSTDSNRLRRETKQSY.

The protein belongs to the protein kinase superfamily. Ser/Thr protein kinase family. Palmitoylation at Cys-3 and Cys-6 are required for plasma membrane location.

The protein localises to the cell membrane. The enzyme catalyses L-seryl-[protein] + ATP = O-phospho-L-seryl-[protein] + ADP + H(+). The catalysed reaction is L-threonyl-[protein] + ATP = O-phospho-L-threonyl-[protein] + ADP + H(+). Functionally, may be involved in plant defense signaling. The protein is Probable serine/threonine-protein kinase PBL22 of Arabidopsis thaliana (Mouse-ear cress).